Reading from the N-terminus, the 83-residue chain is Omega-agatoxin-Aa4b (83 aa).

A signal peptide spans Met1 to Ala20. Positions Thr21–Arg35 are excised as a propeptide. 4 disulfides stabilise this stretch: Cys39-Cys55, Cys47-Cys60, Cys54-Cys71, and Cys62-Cys69. Residue Ser81 is modified to D-serine (Ser).

It belongs to the neurotoxin 02 (plectoxin) family. 03 (omega-agtx) subfamily. Post-translationally, the toxin with D-Ser (named omega-aga IVC) is 80-90 fold more potent than that with L-Ser (omega-aga IVB) against Cav2.1/CACNA1A (P-type) channels in rat cerebellar Purkinje neurons and is more resistant to proteases. The epimerization is done by the venom peptide isomerase heterodimer. As to expression, expressed by the venom gland.

It localises to the secreted. In terms of biological role, antagonist of voltage-gated Cav2.1/CACNA1A (P-type) calcium channels. Paralyzes insect by blocking neuromuscular transmission. This Agelenopsis aperta (North American funnel-web spider) protein is Omega-agatoxin-Aa4b.